We begin with the raw amino-acid sequence, 251 residues long: Large ribosomal subunit protein uL3 (251 aa).

Position 151 is an N5-methylglutamine (Q151). A disordered region spans residues 219-251 (PGAFRRNGEEAAAAPAAEAPAETPAEEAGQEGA). The span at 228–241 (EAAAAPAAEAPAET) shows a compositional bias: low complexity. Acidic residues predominate over residues 242–251 (PAEEAGQEGA).

Belongs to the universal ribosomal protein uL3 family. Part of the 50S ribosomal subunit. Forms a cluster with proteins L14 and L19. Post-translationally, methylated by PrmB.

Its function is as follows. One of the primary rRNA binding proteins, it binds directly near the 3'-end of the 23S rRNA, where it nucleates assembly of the 50S subunit. This chain is Large ribosomal subunit protein uL3, found in Parvibaculum lavamentivorans (strain DS-1 / DSM 13023 / NCIMB 13966).